The primary structure comprises 268 residues: Inositol polyphosphate multikinase (268 aa).

ATP-binding positions include Lys27, Glu86–Ile88, and Asp99. Position 127–135 (Thr127–Ile135) interacts with substrate. Residue Asp235 participates in ATP binding.

It belongs to the inositol phosphokinase (IPK) family.

It is found in the cytoplasm. The protein resides in the nucleus. The catalysed reaction is 1D-myo-inositol 1,4,5-trisphosphate + 2 ATP = 1D-myo-inositol 1,3,4,5,6-pentakisphosphate + 2 ADP + 2 H(+). The enzyme catalyses 1D-myo-inositol 1,4,5-trisphosphate + ATP = 1D-myo-inositol 1,4,5,6-tetrakisphosphate + ADP + H(+). It carries out the reaction 1D-myo-inositol 1,4,5-trisphosphate + ATP = 1D-myo-inositol 1,3,4,5-tetrakisphosphate + ADP + H(+). It catalyses the reaction 1D-myo-inositol 1,4,5,6-tetrakisphosphate + ATP = 1D-myo-inositol 1,3,4,5,6-pentakisphosphate + ADP + H(+). Inositol phosphate kinase with both monophosphoinositol and diphosphoinositol polyphosphate synthase activities. Able to phosphorylate inositol 1,4,5-trisphosphate (Ins(1,4,5)P3) on both the carbon-3 and carbon-6 positions to synthesize inositol 1,3,4,5-tetrakisphosphate (Ins(1,3,4,5)P4) and inositol 1,4,5,6-tetrakisphosphate (Ins(1,4,5,6)P4), and then to subsequently phosphorylate and convert either isomer of InsP4 to inositol 1,3,4,5,6-pentakisphosphate (Ins(1,3,4,5,6)P5). Also converts (Ins(1,3,4,5,6)P5) to InsP6. Also has a role in transcription regulation. The catalytic activity is required for PHO gene repression by phosphate and for NCR gene activation in response to nitrogen availability, indicating a role for inositol pyrophosphates in these controls. Inositol polyphosphates may be involved in the regulation of chromatin remodeling of transcription. The chain is Inositol polyphosphate multikinase (arg82) from Schizosaccharomyces pombe (strain 972 / ATCC 24843) (Fission yeast).